A 487-amino-acid chain; its full sequence is N-succinylglutamate 5-semialdehyde dehydrogenase (487 aa).

An NAD(+)-binding site is contributed by 221–226 (GSSDTG). Catalysis depends on residues glutamate 244 and cysteine 278.

This sequence belongs to the aldehyde dehydrogenase family. AstD subfamily.

The enzyme catalyses N-succinyl-L-glutamate 5-semialdehyde + NAD(+) + H2O = N-succinyl-L-glutamate + NADH + 2 H(+). Its pathway is amino-acid degradation; L-arginine degradation via AST pathway; L-glutamate and succinate from L-arginine: step 4/5. Catalyzes the NAD-dependent reduction of succinylglutamate semialdehyde into succinylglutamate. The sequence is that of N-succinylglutamate 5-semialdehyde dehydrogenase from Burkholderia lata (strain ATCC 17760 / DSM 23089 / LMG 22485 / NCIMB 9086 / R18194 / 383).